We begin with the raw amino-acid sequence, 226 residues long: ATP synthase F(0) complex subunit a (226 aa).

6 helical membrane passes run 11-31 (APTI…TLLI), 68-88 (WSLM…LGLL), 97-117 (QLSM…ITGL), 138-158 (IPML…ALAV), 164-184 (ITAG…LSTI), and 194-214 (VLLM…AYVF).

It belongs to the ATPase A chain family. As to quaternary structure, component of the ATP synthase complex composed at least of ATP5F1A/subunit alpha, ATP5F1B/subunit beta, ATP5MC1/subunit c (homooctomer), MT-ATP6/subunit a, MT-ATP8/subunit 8, ATP5ME/subunit e, ATP5MF/subunit f, ATP5MG/subunit g, ATP5MK/subunit k, ATP5MJ/subunit j, ATP5F1C/subunit gamma, ATP5F1D/subunit delta, ATP5F1E/subunit epsilon, ATP5PF/subunit F6, ATP5PB/subunit b, ATP5PD/subunit d, ATP5PO/subunit OSCP. ATP synthase complex consists of a soluble F(1) head domain (subunits alpha(3) and beta(3)) - the catalytic core - and a membrane F(0) domain - the membrane proton channel (subunits c, a, 8, e, f, g, k and j). These two domains are linked by a central stalk (subunits gamma, delta, and epsilon) rotating inside the F1 region and a stationary peripheral stalk (subunits F6, b, d, and OSCP). Interacts with DNAJC30; interaction is direct.

The protein resides in the mitochondrion inner membrane. The catalysed reaction is H(+)(in) = H(+)(out). Its function is as follows. Subunit a, of the mitochondrial membrane ATP synthase complex (F(1)F(0) ATP synthase or Complex V) that produces ATP from ADP in the presence of a proton gradient across the membrane which is generated by electron transport complexes of the respiratory chain. ATP synthase complex consist of a soluble F(1) head domain - the catalytic core - and a membrane F(1) domain - the membrane proton channel. These two domains are linked by a central stalk rotating inside the F(1) region and a stationary peripheral stalk. During catalysis, ATP synthesis in the catalytic domain of F(1) is coupled via a rotary mechanism of the central stalk subunits to proton translocation. With the subunit c (ATP5MC1), forms the proton-conducting channel in the F(0) domain, that contains two crucial half-channels (inlet and outlet) that facilitate proton movement from the mitochondrial intermembrane space (IMS) into the matrix. Protons are taken up via the inlet half-channel and released through the outlet half-channel, following a Grotthuss mechanism. This is ATP synthase F(0) complex subunit a from Papio hamadryas (Hamadryas baboon).